Consider the following 109-residue polypeptide: Large ribosomal subunit protein uL22 (109 aa).

This sequence belongs to the universal ribosomal protein uL22 family. In terms of assembly, part of the 50S ribosomal subunit.

Its function is as follows. This protein binds specifically to 23S rRNA; its binding is stimulated by other ribosomal proteins, e.g. L4, L17, and L20. It is important during the early stages of 50S assembly. It makes multiple contacts with different domains of the 23S rRNA in the assembled 50S subunit and ribosome. The globular domain of the protein is located near the polypeptide exit tunnel on the outside of the subunit, while an extended beta-hairpin is found that lines the wall of the exit tunnel in the center of the 70S ribosome. The chain is Large ribosomal subunit protein uL22 from Cupriavidus metallidurans (strain ATCC 43123 / DSM 2839 / NBRC 102507 / CH34) (Ralstonia metallidurans).